The chain runs to 432 residues: Gamma-glutamyl phosphate reductase (432 aa).

Belongs to the gamma-glutamyl phosphate reductase family.

It localises to the cytoplasm. The catalysed reaction is L-glutamate 5-semialdehyde + phosphate + NADP(+) = L-glutamyl 5-phosphate + NADPH + H(+). Its pathway is amino-acid biosynthesis; L-proline biosynthesis; L-glutamate 5-semialdehyde from L-glutamate: step 2/2. In terms of biological role, catalyzes the NADPH-dependent reduction of L-glutamate 5-phosphate into L-glutamate 5-semialdehyde and phosphate. The product spontaneously undergoes cyclization to form 1-pyrroline-5-carboxylate. The sequence is that of Gamma-glutamyl phosphate reductase from Corynebacterium melassecola.